A 449-amino-acid polypeptide reads, in one-letter code: Phosphoglucosamine mutase (449 aa).

Residue S100 is the Phosphoserine intermediate of the active site. The Mg(2+) site is built by S100, D241, D243, and D245. At S100 the chain carries Phosphoserine.

It belongs to the phosphohexose mutase family. The cofactor is Mg(2+). In terms of processing, activated by phosphorylation.

It carries out the reaction alpha-D-glucosamine 1-phosphate = D-glucosamine 6-phosphate. Functionally, catalyzes the conversion of glucosamine-6-phosphate to glucosamine-1-phosphate. The sequence is that of Phosphoglucosamine mutase from Clostridium botulinum (strain Kyoto / Type A2).